The chain runs to 432 residues: MRVLVLGSGVIGTTTAYYLARAGFEVVVVDRAEAPAMETSFANAGQVSPGYASPWAAPGVPLKALKWLFERHAPLAIRPTADWRQYLWLAQMLRNCTAGRYALNKERMVRLSEYSRDCLDELRAETGIDYEGRQLGTTQLFRTQRQLDAAGKDIAVLARSGVPYELLDRAGIARVEPALAGVADRLAGALRLPNDQTGDCHLFTTRLAELAAGLGVEFRFGQSVERLERDGERIVGVRIDGRLESADLYVLALGSYSPRLLAPLGIRAPIYPLKGYSLTIPIVDPAMAPTSTILDETYKVAITRFETRIRVGGMAELAGFDLSLNPRRRETLELVVGDLYPRGGDLARAEFWTGLRPATPDGTPIVGATRYRNLFLNTGHGTLGWTMACGSGRLLADLMARTRPQISAAGLDISRYGNSQENSTHVHPAPAN.

FAD is bound at residue 3 to 17; the sequence is VLVLGSGVIGTTTAY.

The protein belongs to the DadA oxidoreductase family. FAD serves as cofactor.

The catalysed reaction is a D-alpha-amino acid + A + H2O = a 2-oxocarboxylate + AH2 + NH4(+). The protein operates within amino-acid degradation; D-alanine degradation; NH(3) and pyruvate from D-alanine: step 1/1. Its function is as follows. Oxidative deamination of D-amino acids. The sequence is that of D-amino acid dehydrogenase from Azotobacter vinelandii (strain DJ / ATCC BAA-1303).